A 250-amino-acid chain; its full sequence is Probable 2' cyclic ADP-D-ribose synthase TcpB (250 aa).

The interval 1–46 (MSKEKQAQSKAHKAQQAISSAKSLSTQKSKMSELERATRDGAAIGK) is disordered. The tract at residues 1-117 (MSKEKQAQSK…TASATMEAEE (117 aa)) is necessary and sufficient for phosphoinositide binding. The span at 14 to 23 (AQQAISSAKS) shows a compositional bias: low complexity. Residues 30-39 (KMSELERATR) are compositionally biased toward basic and acidic residues. One can recognise a TIR domain in the interval 117–250 (EEYDFFISHA…EIAKELHSLI (134 aa)). The active site involves glutamate 192.

As to quaternary structure, homodimer; may also form oligomers. Interacts with host TIRAP. Interacts with host MYD88. Interaction with host MYD88 was not confirmed by another study. Interacts with host TLR4. Abolishes the interaction of host TIRAP with TLR4.

Its subcellular location is the secreted. It localises to the host cell membrane. The enzyme catalyses NAD(+) + H2O = ADP-D-ribose + nicotinamide + H(+). It carries out the reaction NAD(+) = 2'cADPR + nicotinamide + H(+). Virulence factor that interferes with host Toll-like receptor 2 (TLR2) and TLR4 signaling, resulting in the reduction of dendritic cell maturation, inhibition of pro-inflammatory cytokine secretion and impaired NF-kappa-B activation in macrophages. Interferes with host TLR4 signaling by abolishing host TLR4-TIRAP interaction (but not host TIRAP-MYD88 interaction) and its downstream signaling. Inhibits host TLR 2 induced NF-kappa-B activation and TNF (tumor necrosis factor) secretion. Binds phosphoinositide (PtdIns) via its N-terminal domain. Has NAD(+) hydrolase (NADase) activity, catalyzes cleavage of NAD(+) into ADP-D-ribose (ADPR) and nicotinamide. Also generates a cyclization variant of cyclic ADPR (cADPR), termed v-cADPR (probably 2'cADPR). The protein is Probable 2' cyclic ADP-D-ribose synthase TcpB of Brucella melitensis biotype 1 (strain ATCC 23456 / CCUG 17765 / NCTC 10094 / 16M).